The following is a 70-amino-acid chain: Cytochrome c oxidase subunit 8B, mitochondrial (70 aa).

The N-terminal 24 residues, 1–24 (MPRLPPILRLLQAPAKFTVVPKAH), are a transit peptide targeting the mitochondrion. At 25-38 (VSAKPAKTPTSAVE) the chain is on the mitochondrial matrix side. Residues 39–60 (QAVGISAIVVGFMVPAGWVLAH) form a helical membrane-spanning segment. Residues 61-70 (LESYKKSSAA) are Mitochondrial intermembrane-facing.

This sequence belongs to the cytochrome c oxidase VIII family. As to quaternary structure, component of the cytochrome c oxidase (complex IV, CIV), a multisubunit enzyme composed of 14 subunits. The complex is composed of a catalytic core of 3 subunits MT-CO1, MT-CO2 and MT-CO3, encoded in the mitochondrial DNA, and 11 supernumerary subunits COX4I, COX5A, COX5B, COX6A, COX6B, COX6C, COX7A, COX7B, COX7C, COX8 and NDUFA4, which are encoded in the nuclear genome. The complex exists as a monomer or a dimer and forms supercomplexes (SCs) in the inner mitochondrial membrane with NADH-ubiquinone oxidoreductase (complex I, CI) and ubiquinol-cytochrome c oxidoreductase (cytochrome b-c1 complex, complex III, CIII), resulting in different assemblies (supercomplex SCI(1)III(2)IV(1) and megacomplex MCI(2)III(2)IV(2)).

It is found in the mitochondrion inner membrane. It functions in the pathway energy metabolism; oxidative phosphorylation. Component of the cytochrome c oxidase, the last enzyme in the mitochondrial electron transport chain which drives oxidative phosphorylation. The respiratory chain contains 3 multisubunit complexes succinate dehydrogenase (complex II, CII), ubiquinol-cytochrome c oxidoreductase (cytochrome b-c1 complex, complex III, CIII) and cytochrome c oxidase (complex IV, CIV), that cooperate to transfer electrons derived from NADH and succinate to molecular oxygen, creating an electrochemical gradient over the inner membrane that drives transmembrane transport and the ATP synthase. Cytochrome c oxidase is the component of the respiratory chain that catalyzes the reduction of oxygen to water. Electrons originating from reduced cytochrome c in the intermembrane space (IMS) are transferred via the dinuclear copper A center (CU(A)) of subunit 2 and heme A of subunit 1 to the active site in subunit 1, a binuclear center (BNC) formed by heme A3 and copper B (CU(B)). The BNC reduces molecular oxygen to 2 water molecules using 4 electrons from cytochrome c in the IMS and 4 protons from the mitochondrial matrix. This chain is Cytochrome c oxidase subunit 8B, mitochondrial (Cox8b), found in Mus musculus (Mouse).